The sequence spans 130 residues: Small ribosomal subunit protein uS11 (130 aa).

Belongs to the universal ribosomal protein uS11 family. Part of the 30S ribosomal subunit. Interacts with proteins S7 and S18. Binds to IF-3.

Located on the platform of the 30S subunit, it bridges several disparate RNA helices of the 16S rRNA. Forms part of the Shine-Dalgarno cleft in the 70S ribosome. The sequence is that of Small ribosomal subunit protein uS11 from Shewanella violacea (strain JCM 10179 / CIP 106290 / LMG 19151 / DSS12).